Here is a 182-residue protein sequence, read N- to C-terminus: Adenylate kinase (182 aa).

12 to 17 (GAGKGT) contributes to the ATP binding site. An NMP region spans residues 32–61 (STGDLLRAEVKAGSELGKEAEAVMNRGELV). Residues threonine 33, arginine 38, 59–61 (ELV), 85–88 (GFPR), and glutamine 92 contribute to the AMP site. The interval 126–132 (ARGRADD) is LID. Position 127 (arginine 127) interacts with ATP. Residues arginine 129 and arginine 140 each coordinate AMP. Glycine 168 is a binding site for ATP.

Belongs to the adenylate kinase family. In terms of assembly, monomer.

The protein resides in the cytoplasm. The enzyme catalyses AMP + ATP = 2 ADP. The protein operates within purine metabolism; AMP biosynthesis via salvage pathway; AMP from ADP: step 1/1. In terms of biological role, catalyzes the reversible transfer of the terminal phosphate group between ATP and AMP. Plays an important role in cellular energy homeostasis and in adenine nucleotide metabolism. In Synechococcus sp. (strain RCC307), this protein is Adenylate kinase.